The chain runs to 152 residues: Ribosomal RNA large subunit methyltransferase H (152 aa).

S-adenosyl-L-methionine is bound by residues Leu68, Gly100, and 119–124 (FGRMTW).

The protein belongs to the RNA methyltransferase RlmH family. In terms of assembly, homodimer.

Its subcellular location is the cytoplasm. The enzyme catalyses pseudouridine(1915) in 23S rRNA + S-adenosyl-L-methionine = N(3)-methylpseudouridine(1915) in 23S rRNA + S-adenosyl-L-homocysteine + H(+). Functionally, specifically methylates the pseudouridine at position 1915 (m3Psi1915) in 23S rRNA. The protein is Ribosomal RNA large subunit methyltransferase H of Paramagnetospirillum magneticum (strain ATCC 700264 / AMB-1) (Magnetospirillum magneticum).